Consider the following 65-residue polypeptide: Large ribosomal subunit protein bL35 (65 aa).

Residues 1-28 are disordered; it reads MPKMKTHRGAAKRFKKTGTGKIKRGQSK.

The protein belongs to the bacterial ribosomal protein bL35 family.

The protein is Large ribosomal subunit protein bL35 of Acidobacterium capsulatum (strain ATCC 51196 / DSM 11244 / BCRC 80197 / JCM 7670 / NBRC 15755 / NCIMB 13165 / 161).